Consider the following 629-residue polypeptide: uncharacterized protein (629 aa).

Met-1 bears the N-acetylmethionine mark. Residues 308-395 (VDPEPEPDPP…PGRRSRARNA (88 aa)) form a disordered region. The segment covering 322-334 (SANEPASQPNSRS) has biased composition (polar residues). The VWFA domain occupies 451 to 587 (LVIFVVDASG…VAEGAAAVVV (137 aa)).

Belongs to the Mg-chelatase subunits D/I family.

This is an uncharacterized protein from Mycobacterium tuberculosis (strain ATCC 25618 / H37Rv).